Consider the following 965-residue polypeptide: Phosphatidylethanolamine N-methyltransferase (965 aa).

Positions 1-55 are disordered; it reads MSSSAADPFAARLNSDVRQRHPTASATSKNVEGTSQQKQQQQQQQSEANAAASRV. Residues 1-91 lie on the Lumenal side of the membrane; sequence MSSSAADPFA…DPREPKNLSD (91 aa). Residues 22-35 are compositionally biased toward polar residues; that stretch reads PTASATSKNVEGTS. A compositionally biased stretch (low complexity) spans 36–45; it reads QQKQQQQQQQ. The helical transmembrane segment at 92–112 threads the bilayer; that stretch reads VAVLAIIALHFLAAYYLPWGV. Residues 113-115 lie on the Cytoplasmic side of the membrane; that stretch reads KRP. The helical transmembrane segment at 116–136 threads the bilayer; that stretch reads LFAAIFMFWRLAYNVGIGYLL. The Lumenal portion of the chain corresponds to 137–201; that stretch reads TIQSKYKLLV…EYNTWLTFRR (65 aa). Residues 202–222 traverse the membrane as a helical segment; it reads VVDLILMCDFISYCLFAIVCA. Residues 223 to 229 are Cytoplasmic-facing; the sequence is HKPDGEG. Residues 230-250 form a helical membrane-spanning segment; the sequence is LFMCFARWAAGITLVGFNLWV. At 251-279 the chain is on the lumenal side; it reads KLDAHRVVKDYAWYWGDFFYLIEQELTFD. The chain crosses the membrane as a helical span at residues 280-300; the sequence is GVFELAPHPMYSIGYAGYYGI. At 301-306 the chain is on the cytoplasmic side; the sequence is SMMAAS. The helical transmembrane segment at 307–327 threads the bilayer; the sequence is YDVLFISIIAHAAQFAFLVIV. The Lumenal segment spans residues 328-389; that stretch reads ENPHIEKTYN…IGLKNLDFFR (62 aa). The chain crosses the membrane as a helical span at residues 390-410; that stretch reads ITDVAIVLLCAYLAVVTMVTP. Residues 411–417 lie on the Cytoplasmic side of the membrane; it reads NTRFYQA. Residues 418-438 form a helical membrane-spanning segment; it reads LFVLHALAWRLWYSAGLGVIL. Residues 439–467 are Lumenal-facing; it reads TMQSEEKMFTRHFLKYGESVGEAWRQWKG. A helical transmembrane segment spans residues 468–488; that stretch reads IYHLSNCLCHASFIAASYKMY. The Cytoplasmic segment spans residues 489 to 496; it reads EFPADWTY. A helical transmembrane segment spans residues 497–517; the sequence is GWALLKHVVGLSLIALQVWTA. Residues 518-573 lie on the Lumenal side of the membrane; the sequence is TSIYESLGEFGWFYGDFFFDSKRQLTYTSIYRFLNNPERVFGTAGLWGAALITWSR. A helical membrane pass occupies residues 574-594; that stretch reads AIFLMALAGHFLTLAFLAYVE. Residues 595–965 are Cytoplasmic-facing; that stretch reads KPHMQKVYGR…TTPVDSKFSE (371 aa).

Belongs to the class VI-like SAM-binding methyltransferase superfamily. CHO2 family.

It localises to the endoplasmic reticulum membrane. It carries out the reaction a 1,2-diacyl-sn-glycero-3-phosphoethanolamine + S-adenosyl-L-methionine = a 1,2-diacyl-sn-glycero-3-phospho-N-methylethanolamine + S-adenosyl-L-homocysteine + H(+). It participates in phospholipid metabolism; phosphatidylcholine biosynthesis. Catalyzes the first step of the methylation pathway of phosphatidylcholine biosynthesis, the SAM-dependent methylation of phosphatidylethanolamine (PE) to phosphatidylmonomethylethanolamine (PMME). In Neurospora crassa (strain ATCC 24698 / 74-OR23-1A / CBS 708.71 / DSM 1257 / FGSC 987), this protein is Phosphatidylethanolamine N-methyltransferase.